The chain runs to 178 residues: UPF0302 protein BCAH187_A1683 (178 aa).

This sequence belongs to the UPF0302 family.

The protein is UPF0302 protein BCAH187_A1683 of Bacillus cereus (strain AH187).